Here is a 297-residue protein sequence, read N- to C-terminus: MAVMTREDVEFRTMDGLTLRGWLYPSGMRGPALVMTQGFNASKEYLLADVAVWFQKRGVTSLLVDIRTTGLSDGEPRNDIDLDKQVEDCHDAVSFLSRHPSVDPEMIVYWGYSLGAVISLCAAALDKRAAAVIATAPNTDFIFDPVKRAATLSLAMRDRLSRLAGNPPLYLKIIGEDGQNPAGWYLGEERRSPEELDALFNSSNIMNQVTIQSYYRLLRWQPFGLMPSVSPTPVMIVTPSDDDLSKPENQRKLFDIFQEPKEFVLAENKGHMNCISGEDGEQFLQKQLEFMKRMLKF.

The interval 49–272 (DVAVWFQKRG…FVLAENKGHM (224 aa)) is abhydrolase domain.

Belongs to the polyketide transferase af380 family.

The protein operates within mycotoxin biosynthesis. Functionally, polyketide transferase; part of the core atranone cluster (CAC) which products are predicted to catalyze most or all steps of atranone synthesis, starting from geranylgeranyl pyrophosphate (GGPP). The initial cyclization of GGPP to dolabellane is probably performed by the terpene cyclase ATR13. The Baeyer-Villiger oxidation near the end of the atranone synthesis, which converts atranones D and E to atranones F and G is predicted to be catalyzed by the monooxygenase ATR8. Of the CAC's other predicted gene products, the reducing PKS ATR6 might synthesize a polyketide chain. This polyketide is probably transferred onto the atranone backbone by the polyketide transferase ATR5. Other predicted CAC products include 4 oxygenases (ATR2, ATR3, ATR4, and ATR14), 3 short-chain reductases (ATR7, ATR9, and ATR10), and a methyltransferase (ATR12). These may all be involved in the various steps of atranone biosynthesis, although their specific roles must await experimental determination. This is Polyketide transferase ATR5 from Stachybotrys chlorohalonatus (strain IBT 40285).